We begin with the raw amino-acid sequence, 1134 residues long: Tetrathionate reductase subunit A (1134 aa).

Residues 1–31 constitute a signal peptide (tat-type signal); sequence MQLSRRDFIKGLVAVGSASVFLAGYSETVDR. The 4Fe-4S Mo/W bis-MGD-type domain maps to 46–133; sequence GRIVHSACLG…DGIHYLYDPY (88 aa). C53, C56, C60, and C119 together coordinate [4Fe-4S] cluster.

It belongs to the prokaryotic molybdopterin-containing oxidoreductase family. In terms of assembly, probably composed of three subunits: TtrA, TtrB and TtrC. Precursor interacts with TtrD. [4Fe-4S] cluster is required as a cofactor. Requires Mo-bis(molybdopterin guanine dinucleotide) as cofactor. Post-translationally, exported by the Tat system. The position of the signal peptide cleavage has not been experimentally proven.

The protein localises to the cell membrane. In terms of biological role, part of a membrane-bound tetrathionate reductase that catalyzes the reduction of tetrathionate to thiosulfate. TtrA is the catalytic subunit. This is Tetrathionate reductase subunit A (ttrA) from Archaeoglobus fulgidus (strain ATCC 49558 / DSM 4304 / JCM 9628 / NBRC 100126 / VC-16).